The primary structure comprises 463 residues: Zinc finger protein PLAGL1 (463 aa).

7 C2H2-type zinc fingers span residues 4–26, 32–56, 62–84, 91–113, 120–142, 156–178, and 184–207; these read YPCQLCGKTFLTLEKFTIHNYSH, YKCLQPDCGKAFISRYKLMRHMATH, HQCAHCEKTFNRKDHLKNHLQTH, FGCEECGKKYNTMLGYKRHLALH, LTCGVCALELGSTEVLLDHLKAH, HQCDHCERCFYTRKDVRRHLVVH, and FLCQFCAQRFGRKDHLTRHTKKTH. Positions 285–310 are disordered; sequence LHPVAPPTSPPQPLQNHKYNTSSTSY. Pro residues predominate over residues 287 to 297; sequence PVAPPTSPPQP. Residues 298–310 are compositionally biased toward polar residues; it reads LQNHKYNTSSTSY.

The protein belongs to the krueppel C2H2-type zinc-finger protein family. Interacts with THRSP.

It is found in the nucleus. Its function is as follows. Acts as a transcriptional activator. Involved in the transcriptional regulation of type 1 receptor for pituitary adenylate cyclase-activating polypeptide. In Sus scrofa (Pig), this protein is Zinc finger protein PLAGL1 (PLAGL1).